We begin with the raw amino-acid sequence, 81 residues long: Photosystem I iron-sulfur center (81 aa).

4Fe-4S ferredoxin-type domains are found at residues 2 to 31 and 39 to 68; these read SHSVKIYDTCIGCTQCVRACPTDVLEMIPW and IASAPRTEDCVGCKRCESACPTDFLSVRVY. Residues Cys-11, Cys-14, Cys-17, Cys-21, Cys-48, Cys-51, Cys-54, and Cys-58 each coordinate [4Fe-4S] cluster.

As to quaternary structure, the eukaryotic PSI reaction center is composed of at least 11 subunits. [4Fe-4S] cluster is required as a cofactor.

It localises to the plastid. The protein resides in the chloroplast thylakoid membrane. It carries out the reaction reduced [plastocyanin] + hnu + oxidized [2Fe-2S]-[ferredoxin] = oxidized [plastocyanin] + reduced [2Fe-2S]-[ferredoxin]. Apoprotein for the two 4Fe-4S centers FA and FB of photosystem I (PSI); essential for photochemical activity. FB is the terminal electron acceptor of PSI, donating electrons to ferredoxin. The C-terminus interacts with PsaA/B/D and helps assemble the protein into the PSI complex. Required for binding of PsaD and PsaE to PSI. PSI is a plastocyanin-ferredoxin oxidoreductase, converting photonic excitation into a charge separation, which transfers an electron from the donor P700 chlorophyll pair to the spectroscopically characterized acceptors A0, A1, FX, FA and FB in turn. The chain is Photosystem I iron-sulfur center from Spinacia oleracea (Spinach).